The chain runs to 514 residues: ATP synthase subunit alpha (514 aa).

Glycine 170 to threonine 177 is an ATP binding site.

The protein belongs to the ATPase alpha/beta chains family. In terms of assembly, F-type ATPases have 2 components, CF(1) - the catalytic core - and CF(0) - the membrane proton channel. CF(1) has five subunits: alpha(3), beta(3), gamma(1), delta(1), epsilon(1). CF(0) has three main subunits: a(1), b(2) and c(9-12). The alpha and beta chains form an alternating ring which encloses part of the gamma chain. CF(1) is attached to CF(0) by a central stalk formed by the gamma and epsilon chains, while a peripheral stalk is formed by the delta and b chains.

Its subcellular location is the cell inner membrane. The catalysed reaction is ATP + H2O + 4 H(+)(in) = ADP + phosphate + 5 H(+)(out). Functionally, produces ATP from ADP in the presence of a proton gradient across the membrane. The alpha chain is a regulatory subunit. This is ATP synthase subunit alpha from Pseudomonas putida (strain W619).